A 166-amino-acid chain; its full sequence is PR-toxin biosynthesis cluster protein 10 (166 aa).

In terms of biological role, part of the gene cluster that mediates the biosynthesis of PR-toxin, a bicyclic sesquiterpene belonging to the eremophilane class and acting as a mycotoxin. The first step of the pathway is catalyzed by the aristolochene synthase which performs the cyclization of trans,trans-farnesyl diphosphate (FPP) to the bicyclic sesquiterpene aristolochene. Following the formation of aristolochene, the non-oxygenated aristolochene is converted to the trioxygenated intermediate eremofortin B, via 7-epi-neopetasone. This conversion appears to involve three enzymes, a hydroxysterol oxidase-like enzyme, the quinone-oxidase prx3 that forms the quinone-type-structure in the bicyclic nucleus of aristolochene with the C8-oxo group and the C-3 hydroxyl group, and the P450 monooxygenase prx9 that introduces the epoxide at the double bond between carbons 1 and 2. No monoxy or dioxy-intermediates have been reported to be released to the broth, so these three early oxidative reactions may be coupled together. Eremofortin B is further oxidized by another P450 monooxygenase, that introduces a second epoxide between carbons 7 and 11 prior to acetylation to eremofortin A by the acetyltransferase prx11. The second epoxidation may be performed by a second P450 monooxygenase. After the acetylation step, eremofortin A is converted to eremofortin C and then to PR-toxin. First the conversion of eremofortin A to eremofortin C proceeds by oxidation of the side chain of the molecule at C-12 and is catalyzed by the short-chain oxidoreductase prx1. The cytochrome P450 monooxygenase prx8 also plays a role in this step. The primary alcohol formed at C-12 is finally oxidized by the short-chain alcohol dehydrogenase prx4 that forms PR-toxin. The protein is PR-toxin biosynthesis cluster protein 10 of Penicillium rubens (strain ATCC 28089 / DSM 1075 / NRRL 1951 / Wisconsin 54-1255) (Penicillium chrysogenum).